Consider the following 364-residue polypeptide: Coproporphyrin III ferrochelatase (364 aa).

Fe-coproporphyrin III is bound by residues arginine 29 and tyrosine 118. Fe(2+) is bound by residues histidine 169 and glutamate 250.

Belongs to the ferrochelatase family.

It is found in the cytoplasm. The catalysed reaction is Fe-coproporphyrin III + 2 H(+) = coproporphyrin III + Fe(2+). It functions in the pathway porphyrin-containing compound metabolism; protoheme biosynthesis. Involved in coproporphyrin-dependent heme b biosynthesis. Catalyzes the insertion of ferrous iron into coproporphyrin III to form Fe-coproporphyrin III. The protein is Coproporphyrin III ferrochelatase of Streptococcus pneumoniae serotype 4 (strain ATCC BAA-334 / TIGR4).